Here is a 116-residue protein sequence, read N- to C-terminus: Large ribosomal subunit protein uL18 (116 aa).

The protein belongs to the universal ribosomal protein uL18 family. As to quaternary structure, part of the 50S ribosomal subunit; part of the 5S rRNA/L5/L18/L25 subcomplex. Contacts the 5S and 23S rRNAs.

In terms of biological role, this is one of the proteins that bind and probably mediate the attachment of the 5S RNA into the large ribosomal subunit, where it forms part of the central protuberance. The polypeptide is Large ribosomal subunit protein uL18 (Shewanella denitrificans (strain OS217 / ATCC BAA-1090 / DSM 15013)).